The sequence spans 324 residues: Olfactory receptor 52N5 (324 aa).

Residues 1–33 (MPLFNSLCWFPTIHVTPPSFILNGIPGLERVHV) lie on the Extracellular side of the membrane. The helical transmembrane segment at 34 to 54 (WISLPLCTMYIIFLVGNLGLV) threads the bilayer. The Cytoplasmic portion of the chain corresponds to 55–62 (YLIYYEES). A helical membrane pass occupies residues 63 to 84 (LHHPMYFFFGHALSLIDLLTCT). The Extracellular portion of the chain corresponds to 85-108 (TTLPNALCIFWFSLKEINFNACLA). A disulfide bond links C106 and C198. A helical membrane pass occupies residues 109–129 (QMFFVHGFTGVESGVLMLMAL). Residues 130 to 148 (DRYVAICYPLRYATTLTNP) lie on the Cytoplasmic side of the membrane. A helical transmembrane segment spans residues 149–169 (IIAKAELATFLRGVLLMIPFP). Residues 170 to 205 (FLVKRLPFCQSNIISHTYCDHMSVVKLSCASIKVNV) are Extracellular-facing. Residues 206–226 (IYGLMVALLIGVFDICCISLS) traverse the membrane as a helical segment. Over 227 to 246 (YTLILKAAISLSSSDARQKA) the chain is Cytoplasmic. The chain crosses the membrane as a helical span at residues 247-267 (FSTCTAHISAIIITYVPAFFT). The Extracellular portion of the chain corresponds to 268-283 (FFAHRFGGHTIPPSLH). The helical transmembrane segment at 284-304 (IIVANLYLLLPPTLNPIVYGV) threads the bilayer. Topologically, residues 305 to 324 (KTKQIRKSVIKFFQGDKGAG) are cytoplasmic.

The protein belongs to the G-protein coupled receptor 1 family.

It localises to the cell membrane. Odorant receptor. This Homo sapiens (Human) protein is Olfactory receptor 52N5 (OR52N5).